The sequence spans 1102 residues: MPKRTDIQSVLVIGSGPIVIGQAAEFDYSGTQACRVLKAEGLRVVLVNSNPATIMTDPEIADATYVEPITPEFVEKIIAKERPDALLPTLGGQTALNTAISLHGNGVLEKYGVELIGANVEAINKGEDRDLFKEVVEEVRKKIGHGESARSYICHSMDDVLKGVDALGGYPVVVRPSFTMGGAGSGFAHDEDELRRIAGQGLTLSPTTEVLLEESILGWKEYELELMRDKNDNVVVVCSIENFDPMGVHTGDSITVAPAMTLTDREYQTLRDVGIAIIREVGVDTGGCNIQFAVNPEDGRVIVIEMNPRVSRSSALASKATGFPIAKIAAKLAVGYTLDEIPNDITQETPASFEPTLDYVVVKAPRFAFEKFPSADSTLTTTMKSVGEAMAIGRNFTEAFQKALRSLEKKGSQFTFVGEPGDKDELLREAVRPTDGRINAVMQAIRAGATPEEVFDATKIDPWFVDQLFLIKEIADEIAESRELTADLLTEAKRHGFSDQQIAEISGLGEDVVRQVRHALGVRPVYKTVDTCAAEFAARTPYFYSSYDEESEVAPREKPAVIILGSGPNRIGQGIEFDYSCVHASFALSDAGYETVMVNCNPETVSTDYDTSDRLYFEPLTLEDVLEIVHAEQQAGPVAGVIVQLGGQTPLGLSQALKDNGVPVVGTSPEAIHAAEDRGAFGRVLAEAGLPAPKHGTATTFGEAKAIADEIGYPVLVRPSYVLGGRGMEIVYDETRLEAYIAESTEISPSRPVLVDRFLDDAIEIDVDALYDGEELYLGGVMEHIEEAGIHSGDSACALPPITLGGFDIKRLRASTEGIAKGVGVRGLINIQFALAGDILYVLEANPRASRTVPFTSKATAVPLAKAAARISLGATIAELRAEGLLPALGDGGTLPLDAPISVKEAVMPWSRFRDIHGRGVDTVLGPEMRSTGEVMGIDSVFGTAYAKSQAGAYGPLPTKGRAFISVANRDKRSMIFPARELVAHGFELMATSGTAEVLKRNGINATVVRKQSEGTGPNGEKTIVQLIHDGEVDLIVNTPYGTSGRLDGYDIRTAAVARSVPCLTTVQALAAAVQGIDALNHGDVGVRSLQEHAAFLIAARD.

The segment at 1 to 408 is carboxyphosphate synthetic domain; that stretch reads MPKRTDIQSV…AFQKALRSLE (408 aa). Positions 129, 175, 181, 182, 214, 216, 221, 247, 248, 249, 291, and 305 each coordinate ATP. In terms of domain architecture, ATP-grasp 1 spans 137–334; it reads EEVRKKIGHG…IAKIAAKLAV (198 aa). Residues Gln-291, Glu-305, and Asn-307 each coordinate Mg(2+). Mn(2+) is bound by residues Gln-291, Glu-305, and Asn-307. The segment at 409-551 is oligomerization domain; it reads KKGSQFTFVG…YFYSSYDEES (143 aa). Positions 552 to 954 are carbamoyl phosphate synthetic domain; it reads EVAPREKPAV…AYAKSQAGAY (403 aa). Residues 682 to 873 form the ATP-grasp 2 domain; it reads GRVLAEAGLP…LAKAAARISL (192 aa). ATP is bound by residues Arg-718, Arg-757, Leu-759, Glu-764, Gly-789, Ile-790, His-791, Ser-792, Gln-832, and Glu-844. Gln-832, Glu-844, and Asn-846 together coordinate Mg(2+). Mn(2+)-binding residues include Gln-832, Glu-844, and Asn-846. The region spanning 955–1100 is the MGS-like domain; it reads GPLPTKGRAF…QEHAAFLIAA (146 aa). Positions 955-1102 are allosteric domain; sequence GPLPTKGRAF…HAAFLIAARD (148 aa).

Belongs to the CarB family. As to quaternary structure, composed of two chains; the small (or glutamine) chain promotes the hydrolysis of glutamine to ammonia, which is used by the large (or ammonia) chain to synthesize carbamoyl phosphate. Tetramer of heterodimers (alpha,beta)4. Requires Mg(2+) as cofactor. Mn(2+) is required as a cofactor.

The catalysed reaction is hydrogencarbonate + L-glutamine + 2 ATP + H2O = carbamoyl phosphate + L-glutamate + 2 ADP + phosphate + 2 H(+). It catalyses the reaction hydrogencarbonate + NH4(+) + 2 ATP = carbamoyl phosphate + 2 ADP + phosphate + 2 H(+). The protein operates within amino-acid biosynthesis; L-arginine biosynthesis; carbamoyl phosphate from bicarbonate: step 1/1. Its pathway is pyrimidine metabolism; UMP biosynthesis via de novo pathway; (S)-dihydroorotate from bicarbonate: step 1/3. In terms of biological role, large subunit of the glutamine-dependent carbamoyl phosphate synthetase (CPSase). CPSase catalyzes the formation of carbamoyl phosphate from the ammonia moiety of glutamine, carbonate, and phosphate donated by ATP, constituting the first step of 2 biosynthetic pathways, one leading to arginine and/or urea and the other to pyrimidine nucleotides. The large subunit (synthetase) binds the substrates ammonia (free or transferred from glutamine from the small subunit), hydrogencarbonate and ATP and carries out an ATP-coupled ligase reaction, activating hydrogencarbonate by forming carboxy phosphate which reacts with ammonia to form carbamoyl phosphate. This chain is Carbamoyl phosphate synthase large chain, found in Streptomyces coelicolor (strain ATCC BAA-471 / A3(2) / M145).